The sequence spans 142 residues: Large ribosomal subunit protein mL42 (142 aa).

A mitochondrion-targeting transit peptide spans 1–32 (MAVAAVKWVMSKRTILKHLFPVQNGALYCVCH).

This sequence belongs to the mitochondrion-specific ribosomal protein mL42 family. As to quaternary structure, component of the mitochondrial large ribosomal subunit (mt-LSU). Mature mammalian 55S mitochondrial ribosomes consist of a small (28S) and a large (39S) subunit. The 28S small subunit contains a 12S ribosomal RNA (12S mt-rRNA) and 30 different proteins. The 39S large subunit contains a 16S rRNA (16S mt-rRNA), a copy of mitochondrial valine transfer RNA (mt-tRNA(Val)), which plays an integral structural role, and 52 different proteins.

The protein resides in the mitochondrion. The chain is Large ribosomal subunit protein mL42 (MRPL42) from Homo sapiens (Human).